Consider the following 704-residue polypeptide: Cystathionine beta-synthase cbs-1 (704 aa).

Residues asparagine 454, 562–566, and serine 652 contribute to the pyridoxal 5'-phosphate site; that span reads GTGGT.

The protein belongs to the cysteine synthase/cystathionine beta-synthase family. In terms of assembly, monomer. As to quaternary structure, does not bind pyridoxal 5'-phosphate, PLP; which may explain why this isoform has virtually undetectable catalytic activity. Requires pyridoxal 5'-phosphate as cofactor.

The protein resides in the cytoplasm. It carries out the reaction L-homocysteine + L-serine = L,L-cystathionine + H2O. It functions in the pathway amino-acid biosynthesis; L-cysteine biosynthesis; L-cysteine from L-homocysteine and L-serine: step 1/2. In terms of biological role, hydro-lyase catalyzing the first step of the transsulfuration pathway, where the hydroxyl group of L-serine is displaced by L-homocysteine in a beta-replacement reaction to form L-cystathionine, the precursor of L-cysteine. Plays a role in maintaining homocysteine homeostasis. Involved in cold-induced somatic longevity mediated by prostaglandin E2 (PGE2) signals from adult germ cells, perhaps acting via a role in the production of hydrogen sulfide (H2S). Required for normal development. In Caenorhabditis elegans, this protein is Cystathionine beta-synthase cbs-1.